Here is a 336-residue protein sequence, read N- to C-terminus: Serpentine receptor class beta-15 (336 aa).

7 helical membrane passes run 24–44, 57–77, 109–129, 142–162, 186–206, 237–257, and 276–296; these read LFIHLFVSISSIIPLIYFVIF, FLFSAYFVSVFLFSVDFAIIS, IFMSLSTFFPISITIERFIAM, LGPILTGCNILLDLLIVFFIY, FTFFWVMFFLNLINFTFNSYL, VFVVFCHVILFGFYVIGIMIL, and GAFTTMISLYNLVVGSVAVYL.

It belongs to the nematode receptor-like protein srb family.

It is found in the membrane. The polypeptide is Serpentine receptor class beta-15 (srb-15) (Caenorhabditis elegans).